A 197-amino-acid polypeptide reads, in one-letter code: ATP-dependent Clp protease proteolytic subunit 2 (197 aa).

The Nucleophile role is filled by Ser-101. His-126 is a catalytic residue.

It belongs to the peptidase S14 family. Fourteen ClpP subunits assemble into 2 heptameric rings which stack back to back to give a disk-like structure with a central cavity, resembling the structure of eukaryotic proteasomes.

The protein localises to the cytoplasm. The catalysed reaction is Hydrolysis of proteins to small peptides in the presence of ATP and magnesium. alpha-casein is the usual test substrate. In the absence of ATP, only oligopeptides shorter than five residues are hydrolyzed (such as succinyl-Leu-Tyr-|-NHMec, and Leu-Tyr-Leu-|-Tyr-Trp, in which cleavage of the -Tyr-|-Leu- and -Tyr-|-Trp bonds also occurs).. Functionally, cleaves peptides in various proteins in a process that requires ATP hydrolysis. Has a chymotrypsin-like activity. Plays a major role in the degradation of misfolded proteins. This is ATP-dependent Clp protease proteolytic subunit 2 from Trichormus variabilis (strain ATCC 29413 / PCC 7937) (Anabaena variabilis).